Consider the following 198-residue polypeptide: Ribose 1,5-bisphosphate phosphokinase PhnN (198 aa).

An ATP-binding site is contributed by 25–32 (GPSGAGKD).

Belongs to the ribose 1,5-bisphosphokinase family.

The enzyme catalyses alpha-D-ribose 1,5-bisphosphate + ATP = 5-phospho-alpha-D-ribose 1-diphosphate + ADP. It participates in metabolic intermediate biosynthesis; 5-phospho-alpha-D-ribose 1-diphosphate biosynthesis; 5-phospho-alpha-D-ribose 1-diphosphate from D-ribose 5-phosphate (route II): step 3/3. Catalyzes the phosphorylation of ribose 1,5-bisphosphate to 5-phospho-D-ribosyl alpha-1-diphosphate (PRPP). The sequence is that of Ribose 1,5-bisphosphate phosphokinase PhnN from Bradyrhizobium diazoefficiens (strain JCM 10833 / BCRC 13528 / IAM 13628 / NBRC 14792 / USDA 110).